The chain runs to 646 residues: Protein SENSITIVE TO UV 2 (646 aa).

The tract at residues 42 to 70 (PAPPPSTKISSSLSHPMQLQSSAGQQRKQ) is disordered. Residues 48–70 (TKISSSLSHPMQLQSSAGQQRKQ) show a composition bias toward polar residues. The Nuclear localization signal signature appears at 119 to 126 (NRRCDSEK). A coiled-coil region spans residues 123–157 (DSEKDLEIDRLKKELERVSKQLLDVEQECSQLKKG). A Phosphatase tensin-type domain is found at 376–646 (KRTEQDVKQE…VFAFLGDNTI (271 aa)).

It belongs to the serpin family. Forms multimers through the coiled-coil domain. Post-translationally, probably phosphorylated by ATR. Accumulates throughout the root tip.

It localises to the nucleus. The protein localises to the cytoplasm. Its function is as follows. Required for tolerance to DNA-damaging and cross-linking agents such as UVB irradiation, gamma-radiation, aphidicolin, ionizing radiation and hydroxyurea (HU), cisplatin (CDDP) and mitomycin C (MMC). Involved in cell-cycle G2/M arrest in response to DNA damage. Required for aluminum-dependent gene regulation and root growth inhibition in an ATR-dependent manner by halting cell cycle progression and triggering loss of the quiescent center (QC). This is Protein SENSITIVE TO UV 2 from Arabidopsis thaliana (Mouse-ear cress).